A 900-amino-acid chain; its full sequence is Alanine--tRNA ligase (900 aa).

Zn(2+)-binding residues include histidine 604, histidine 608, cysteine 708, and histidine 712.

Belongs to the class-II aminoacyl-tRNA synthetase family. Zn(2+) is required as a cofactor.

It localises to the cytoplasm. It carries out the reaction tRNA(Ala) + L-alanine + ATP = L-alanyl-tRNA(Ala) + AMP + diphosphate. In terms of biological role, catalyzes the attachment of alanine to tRNA(Ala) in a two-step reaction: alanine is first activated by ATP to form Ala-AMP and then transferred to the acceptor end of tRNA(Ala). Also edits incorrectly charged Ser-tRNA(Ala) and Gly-tRNA(Ala) via its editing domain. This is Alanine--tRNA ligase from Saccharolobus islandicus (strain Y.G.57.14 / Yellowstone #1) (Sulfolobus islandicus).